Reading from the N-terminus, the 457-residue chain is Equilibrative nucleoside transporter 1 (457 aa).

Residues 1-12 (MTTSHQPQDRYK) lie on the Cytoplasmic side of the membrane. A helical membrane pass occupies residues 13-29 (AVWLIFFVLGLGTLLPW). The Extracellular segment spans residues 30–82 (NFFITATQYFTSRLNTSQNISLVTNQSCESTEALADPSVSLPARSSLSAIFNN). 3 N-linked (GlcNAc...) asparagine glycosylation sites follow: N44, N48, and N54. A helical transmembrane segment spans residues 83–107 (VMTLCAMLPLLIFTCLNSFLHQKVS). The Cytoplasmic portion of the chain corresponds to 108 to 111 (QSLR). Residues 112–130 (ILGSLLAILLVFLVTATLV) traverse the membrane as a helical segment. Residues 131-138 (KVQMDALS) are Extracellular-facing. A helical transmembrane segment spans residues 139–157 (FFIITMIKIVLINSFGAIL). The Cytoplasmic portion of the chain corresponds to 158-174 (QASLFGLAGVLPANYTA). The chain crosses the membrane as a helical span at residues 175–199 (PIMSGQGLAGFFTSVAMICAVASGS). The Extracellular segment spans residues 200–206 (KLSESAF). A helical transmembrane segment spans residues 207-227 (GYFITACAVVILAILCYLALP). Over 228–291 (WMEFYRHYLQ…IKAILKSIWV (64 aa)) the chain is Cytoplasmic. A Phosphoserine modification is found at S254. The span at 255–266 (EGEEPRGGREES) shows a compositional bias: basic and acidic residues. The segment at 255 to 275 (EGEEPRGGREESGVPGPNSLP) is disordered. Residue S273 is modified to Phosphoserine. The helical transmembrane segment at 292–311 (LALSVCFIFTVTIGLFPAVT) threads the bilayer. The Extracellular portion of the chain corresponds to 312–323 (AEVESSIAGTSP). A helical transmembrane segment spans residues 324 to 343 (WKNCYFIPVACFLNFNVFDW). At 344–360 (LGRSLTAICMWPGQDSR) the chain is on the cytoplasmic side. A helical transmembrane segment spans residues 361 to 379 (WLPVLVACRVVFIPLLMLC). The Extracellular segment spans residues 380-394 (NVKQHHYLPSLFKHD). A helical transmembrane segment spans residues 395 to 414 (VWFITFMAAFAFSNGYLASL). The Cytoplasmic portion of the chain corresponds to 415–432 (CMCFGPKKVKPAEAETAG). Residues 433 to 453 (NIMSFFLCLGLALGAVLSFLL) traverse the membrane as a helical segment. The Extracellular segment spans residues 454–457 (RALV).

It belongs to the SLC29A/ENT transporter (TC 2.A.57) family. As to quaternary structure, identified in a complex with STOM. In terms of tissue distribution, expressed in jejunum, liver and lung. Expressed in testis at the blood-testis barrier (at protein level). Expressed in ventricular myocytes (at protein level). Expressed in kidney.

It is found in the basolateral cell membrane. Its subcellular location is the apical cell membrane. It localises to the cell membrane. It carries out the reaction adenosine(in) = adenosine(out). The catalysed reaction is guanosine(in) = guanosine(out). The enzyme catalyses inosine(in) = inosine(out). It catalyses the reaction uridine(out) = uridine(in). It carries out the reaction thymidine(in) = thymidine(out). The catalysed reaction is cytidine(in) = cytidine(out). The enzyme catalyses adenine(out) = adenine(in). It catalyses the reaction guanine(out) = guanine(in). It carries out the reaction thymine(out) = thymine(in). The catalysed reaction is uracil(in) = uracil(out). The enzyme catalyses hypoxanthine(out) = hypoxanthine(in). Transport activity is sensitive to low concentrations of the inhibitor nitrobenzylmercaptopurine riboside (NBMPR). Uniporter involved in the facilitative transport of nucleosides and nucleobases, and contributes to maintaining their cellular homeostasis. Functions as a Na(+)-independent transporter. Involved in the transport of nucleosides such as adenosine, thymidine and uridine. Also transports purine nucleobases (hypoxanthine, adenine, guanine) and pyrimidine nucleobases (thymine, uracil). Mediates basolateral nucleoside uptake into Sertoli cells, thereby regulating the transport of nucleosides in testis across the blood-testis barrier. Regulates inosine levels in brown adipocytes tissues (BAT) and extracellular inosine levels, which controls BAT-dependent energy expenditure. The polypeptide is Equilibrative nucleoside transporter 1 (Rattus norvegicus (Rat)).